A 678-amino-acid polypeptide reads, in one-letter code: Protein hook (678 aa).

The segment at 1-155 (MSTQNGMYYS…NIMRALQELE (155 aa)) is interaction with microtubules. Positions 5-123 (NGMYYSLLEW…RLLQLVLGCA (119 aa)) constitute a Calponin-homology (CH) domain. Coiled coils occupy residues 135-435 (EIMC…LKCG) and 479-589 (QTAL…AKEV).

This sequence belongs to the hook family. As to quaternary structure, homodimer. Interacts with microtubules via its N-terminus.

Its subcellular location is the cytoplasm. It localises to the cytoskeleton. The protein localises to the endosome. It is found in the synapse. Its function is as follows. Involved in endocytic trafficking by stabilizing organelles of the endocytic pathway. Probably acts as a cytoskeletal linker protein required to tether endosome vesicles to the cytoskeleton. Involved in modulation of endocytosis at stages required for down-regulation of membrane proteins that control synapse size. Not involved in synaptic vesicle recycling. Required in R7 cells for boss endocytosis into multivesicular bodies (MVBs). Has a role in regulating adult longevity. In Drosophila virilis (Fruit fly), this protein is Protein hook.